A 602-amino-acid polypeptide reads, in one-letter code: Arginine--tRNA ligase (602 aa).

Positions 132 to 142 (ANPTGPLHVGH) match the 'HIGH' region motif.

The protein belongs to the class-I aminoacyl-tRNA synthetase family. Monomer.

Its subcellular location is the cytoplasm. It carries out the reaction tRNA(Arg) + L-arginine + ATP = L-arginyl-tRNA(Arg) + AMP + diphosphate. The sequence is that of Arginine--tRNA ligase from Cupriavidus metallidurans (strain ATCC 43123 / DSM 2839 / NBRC 102507 / CH34) (Ralstonia metallidurans).